We begin with the raw amino-acid sequence, 312 residues long: Glycine--tRNA ligase alpha subunit (312 aa).

It belongs to the class-II aminoacyl-tRNA synthetase family. As to quaternary structure, tetramer of two alpha and two beta subunits.

The protein resides in the cytoplasm. The catalysed reaction is tRNA(Gly) + glycine + ATP = glycyl-tRNA(Gly) + AMP + diphosphate. This chain is Glycine--tRNA ligase alpha subunit, found in Methylobacillus flagellatus (strain ATCC 51484 / DSM 6875 / VKM B-1610 / KT).